The sequence spans 930 residues: Isoleucine--tRNA ligase (930 aa).

Residues 57–67 (PYANGNIHVGH) carry the 'HIGH' region motif. Glu-554 lines the L-isoleucyl-5'-AMP pocket. Residues 595–599 (KMSKS) carry the 'KMSKS' region motif. Residue Lys-598 participates in ATP binding. Zn(2+) contacts are provided by Cys-888, Cys-891, Cys-908, and Cys-911.

It belongs to the class-I aminoacyl-tRNA synthetase family. IleS type 1 subfamily. As to quaternary structure, monomer. Zn(2+) serves as cofactor.

Its subcellular location is the cytoplasm. It carries out the reaction tRNA(Ile) + L-isoleucine + ATP = L-isoleucyl-tRNA(Ile) + AMP + diphosphate. Functionally, catalyzes the attachment of isoleucine to tRNA(Ile). As IleRS can inadvertently accommodate and process structurally similar amino acids such as valine, to avoid such errors it has two additional distinct tRNA(Ile)-dependent editing activities. One activity is designated as 'pretransfer' editing and involves the hydrolysis of activated Val-AMP. The other activity is designated 'posttransfer' editing and involves deacylation of mischarged Val-tRNA(Ile). The sequence is that of Isoleucine--tRNA ligase from Streptococcus pneumoniae (strain P1031).